Consider the following 71-residue polypeptide: Large ribosomal subunit protein uL29 (71 aa).

It belongs to the universal ribosomal protein uL29 family.

The protein is Large ribosomal subunit protein uL29 of Rickettsia massiliae (strain Mtu5).